The sequence spans 287 residues: Homoserine kinase (287 aa).

79–89 (PLARGLGSSSS) lines the ATP pocket.

It belongs to the GHMP kinase family. Homoserine kinase subfamily.

Its subcellular location is the cytoplasm. It catalyses the reaction L-homoserine + ATP = O-phospho-L-homoserine + ADP + H(+). It participates in amino-acid biosynthesis; L-threonine biosynthesis; L-threonine from L-aspartate: step 4/5. Its function is as follows. Catalyzes the ATP-dependent phosphorylation of L-homoserine to L-homoserine phosphate. This chain is Homoserine kinase, found in Enterococcus faecalis (strain ATCC 700802 / V583).